Here is an 839-residue protein sequence, read N- to C-terminus: LPS-assembly protein LptD (839 aa).

The first 21 residues, Met-1–Ser-21, serve as a signal peptide directing secretion.

It belongs to the LptD family. Component of the lipopolysaccharide transport and assembly complex. Interacts with LptE and LptA.

It is found in the cell outer membrane. Together with LptE, is involved in the assembly of lipopolysaccharide (LPS) at the surface of the outer membrane. This is LPS-assembly protein LptD from Legionella pneumophila subsp. pneumophila (strain Philadelphia 1 / ATCC 33152 / DSM 7513).